We begin with the raw amino-acid sequence, 935 residues long: C-1-tetrahydrofolate synthase, cytoplasmic (935 aa).

The residue at position 1 (M1) is an N-acetylmethionine. Residues 2-291 form a methylenetetrahydrofolate dehydrogenase and methenyltetrahydrofolate cyclohydrolase (D/C) domain region; it reads APAEILNGRE…MLMQSTVESA (290 aa). Residues 52-56 and 99-101 contribute to the substrate site; these read YINVK and VQL. Residue K56 is part of the active site. NADP(+)-binding positions include 172–174 and S197; that span reads GRS. 272–276 lines the substrate pocket; that stretch reads PGGVG. Residues 310 to 935 are formyltetrahydrofolate synthetase domain; sequence LNLKTPDPSD…PETQQVNGLF (626 aa). At S318 the chain carries Phosphoserine. Residue 380–387 participates in ATP binding; it reads TPLGEGKS. Residues S413 and S490 each carry the phosphoserine modification.

In the N-terminal section; belongs to the tetrahydrofolate dehydrogenase/cyclohydrolase family. The protein in the C-terminal section; belongs to the formate--tetrahydrofolate ligase family. Homodimer.

Its subcellular location is the cytoplasm. It catalyses the reaction (6R)-5,10-methylene-5,6,7,8-tetrahydrofolate + NADP(+) = (6R)-5,10-methenyltetrahydrofolate + NADPH. It carries out the reaction (6R)-5,10-methenyltetrahydrofolate + H2O = (6R)-10-formyltetrahydrofolate + H(+). The catalysed reaction is (6S)-5,6,7,8-tetrahydrofolate + formate + ATP = (6R)-10-formyltetrahydrofolate + ADP + phosphate. It functions in the pathway one-carbon metabolism; tetrahydrofolate interconversion. Functionally, trifunctional enzyme that catalyzes the interconversion of three forms of one-carbon-substituted tetrahydrofolate: (6R)-5,10-methylene-5,6,7,8-tetrahydrofolate, 5,10-methenyltetrahydrofolate and (6S)-10-formyltetrahydrofolate. These derivatives of tetrahydrofolate are differentially required in nucleotide and amino acid biosynthesis, (6S)-10-formyltetrahydrofolate being required for purine biosynthesis while (6R)-5,10-methylene-5,6,7,8-tetrahydrofolate is used for serine and methionine biosynthesis for instance. In Pongo abelii (Sumatran orangutan), this protein is C-1-tetrahydrofolate synthase, cytoplasmic (MTHFD1).